A 169-amino-acid chain; its full sequence is MERAIFAGGCFWCMVQPFEEQAGILSVRSGYTGGHLPNPSYEQVCAKTTGHTEAVEIIFDPEEISYKELVELYWAQTDPTDAFGQFEDRGDNYRPVIYYTTERQKEIAEQSKANLQASGRFDQPIVTTIEPAEPFYLAEDYHQGFYKKNPKRYAQSSAIRHQFLEENWS.

Cys-10 is an active-site residue.

The protein belongs to the MsrA Met sulfoxide reductase family.

The catalysed reaction is L-methionyl-[protein] + [thioredoxin]-disulfide + H2O = L-methionyl-(S)-S-oxide-[protein] + [thioredoxin]-dithiol. It carries out the reaction [thioredoxin]-disulfide + L-methionine + H2O = L-methionine (S)-S-oxide + [thioredoxin]-dithiol. In terms of biological role, has an important function as a repair enzyme for proteins that have been inactivated by oxidation. Catalyzes the reversible oxidation-reduction of methionine sulfoxide in proteins to methionine. In Streptococcus pyogenes serotype M6 (strain ATCC BAA-946 / MGAS10394), this protein is Peptide methionine sulfoxide reductase MsrA.